The sequence spans 160 residues: uncharacterized protein (160 aa).

Topologically, residues Met1–Ala33 are extracellular. Residues Ala34 to Val54 form a helical membrane-spanning segment. Over Glu55–Ser68 the chain is Cytoplasmic. Residues Phe69–Ser89 traverse the membrane as a helical segment. Residues Thr90–Val119 lie on the Extracellular side of the membrane. A helical transmembrane segment spans residues Thr120–Val140. The Cytoplasmic portion of the chain corresponds to Lys141–Leu160.

The protein resides in the membrane. This is an uncharacterized protein from Saccharomyces cerevisiae (strain ATCC 204508 / S288c) (Baker's yeast).